The sequence spans 205 residues: MELPVNSFDKKEASTLTVADSAFGSEYKEGLVHQVVNAYLAGGRAGTKAQKTRREVSGGGAKPWRQKGTGRARAGSSRSPLWRSGGVAFAAKPRDFTQKVNRKMYRSAMASILSELIRREQLVVVDSLKLNEPKTRELKESLKKLNLGNVLIIIDGDDRNINLASRNMVGVSVCDALHVDPVSLVAAENIVVTVDAVKRLEERLS.

Positions 44 to 79 are disordered; sequence RAGTKAQKTRREVSGGGAKPWRQKGTGRARAGSSRS.

The protein belongs to the universal ribosomal protein uL4 family. In terms of assembly, part of the 50S ribosomal subunit.

In terms of biological role, one of the primary rRNA binding proteins, this protein initially binds near the 5'-end of the 23S rRNA. It is important during the early stages of 50S assembly. It makes multiple contacts with different domains of the 23S rRNA in the assembled 50S subunit and ribosome. Forms part of the polypeptide exit tunnel. The polypeptide is Large ribosomal subunit protein uL4 (Coxiella burnetii (strain RSA 331 / Henzerling II)).